Reading from the N-terminus, the 311-residue chain is Formimidoylglutamase (311 aa).

H122, D151, H153, D155, C242, and D244 together coordinate Mn(2+).

This sequence belongs to the arginase family. Mn(2+) serves as cofactor.

The catalysed reaction is N-formimidoyl-L-glutamate + H2O = formamide + L-glutamate. It functions in the pathway amino-acid degradation; L-histidine degradation into L-glutamate; L-glutamate from N-formimidoyl-L-glutamate (hydrolase route): step 1/1. In terms of biological role, catalyzes the conversion of N-formimidoyl-L-glutamate to L-glutamate and formamide. This chain is Formimidoylglutamase, found in Pseudomonas paraeruginosa (strain DSM 24068 / PA7) (Pseudomonas aeruginosa (strain PA7)).